We begin with the raw amino-acid sequence, 200 residues long: Large ribosomal subunit protein uL4 (200 aa).

The tract at residues 38 to 68 is disordered; the sequence is GRQGSKQQKTRSDVRGGGKRPWRQKGTGRAR. Residues 54–65 show a composition bias toward basic residues; it reads GGKRPWRQKGTG.

This sequence belongs to the universal ribosomal protein uL4 family. As to quaternary structure, part of the 50S ribosomal subunit.

In terms of biological role, one of the primary rRNA binding proteins, this protein initially binds near the 5'-end of the 23S rRNA. It is important during the early stages of 50S assembly. It makes multiple contacts with different domains of the 23S rRNA in the assembled 50S subunit and ribosome. Forms part of the polypeptide exit tunnel. The sequence is that of Large ribosomal subunit protein uL4 from Pseudomonas savastanoi pv. phaseolicola (strain 1448A / Race 6) (Pseudomonas syringae pv. phaseolicola (strain 1448A / Race 6)).